The chain runs to 293 residues: 4-hydroxy-tetrahydrodipicolinate synthase (293 aa).

Residue Thr45 participates in pyruvate binding. Residue Tyr133 is the Proton donor/acceptor of the active site. Lys161 functions as the Schiff-base intermediate with substrate in the catalytic mechanism. A pyruvate-binding site is contributed by Ile204.

This sequence belongs to the DapA family. Homotetramer; dimer of dimers.

It localises to the cytoplasm. The catalysed reaction is L-aspartate 4-semialdehyde + pyruvate = (2S,4S)-4-hydroxy-2,3,4,5-tetrahydrodipicolinate + H2O + H(+). It functions in the pathway amino-acid biosynthesis; L-lysine biosynthesis via DAP pathway; (S)-tetrahydrodipicolinate from L-aspartate: step 3/4. Catalyzes the condensation of (S)-aspartate-beta-semialdehyde [(S)-ASA] and pyruvate to 4-hydroxy-tetrahydrodipicolinate (HTPA). The polypeptide is 4-hydroxy-tetrahydrodipicolinate synthase (Edwardsiella ictaluri (strain 93-146)).